We begin with the raw amino-acid sequence, 414 residues long: Membrane protein UL43 (414 aa).

The next 6 membrane-spanning stretches (helical) occupy residues 39–59 (GFAH…VVLS), 61–81 (GPYA…LGFL), 96–116 (AWLR…GEAG), 121–141 (VPGP…LLVL), 148–168 (LFLL…VGGL), and 184–204 (AAAL…GDSF). The segment at 225–253 (PRYAPEDAERPTDHGPLLPSTHHQRSPRV) is disordered. Basic and acidic residues predominate over residues 228 to 237 (APEDAERPTD). A run of 2 helical transmembrane segments spans residues 339–359 (GLMF…AVWI) and 383–403 (ATLR…GVLV).

This sequence belongs to the alphaherpesvirinae HHV-1 UL43 family.

Its subcellular location is the membrane. The polypeptide is Membrane protein UL43 (Homo sapiens (Human)).